Consider the following 194-residue polypeptide: Fe/S biogenesis protein NfuA (194 aa).

Residues cysteine 151 and cysteine 154 each contribute to the [4Fe-4S] cluster site.

This sequence belongs to the NfuA family. As to quaternary structure, homodimer. [4Fe-4S] cluster serves as cofactor.

Its function is as follows. Involved in iron-sulfur cluster biogenesis. Binds a 4Fe-4S cluster, can transfer this cluster to apoproteins, and thereby intervenes in the maturation of Fe/S proteins. Could also act as a scaffold/chaperone for damaged Fe/S proteins. This chain is Fe/S biogenesis protein NfuA, found in Vibrio vulnificus (strain CMCP6).